The sequence spans 649 residues: Transmembrane and coiled-coil domains protein 1 (649 aa).

Position 1 is an N-acetylmethionine (M1). Disordered stretches follow at residues 1-37 (MEPS…LSKM), 58-83 (HQRR…EVDL), 110-166 (RVPP…PTSS), and 197-222 (LAQT…GIPD). The Cytoplasmic portion of the chain corresponds to 1-587 (MEPSGSEQLY…ARNLLGKLIN (587 aa)). Over residues 20 to 34 (QDAEARRQTESEQKL) the composition is skewed to basic and acidic residues. The span at 64 to 75 (SVSPHDVQQIQT) shows a compositional bias: polar residues. Basic residues predominate over residues 113-125 (PKMKRGTSLHSRR). Low complexity predominate over residues 156–166 (SSSTTDAPTSS). Polar residues predominate over residues 197–214 (LAQTSSAVASSTDGSIHT). A coiled-coil region spans residues 224–310 (QRTKAAIAHL…KLREVEQNGI (87 aa)). Phosphoserine occurs at positions 378 and 410. The segment at 411–433 (PKYGSEEDCSSATSGSVGANSTT) is disordered. The segment covering 420-433 (SSATSGSVGANSTT) has biased composition (polar residues). A coiled-coil region spans residues 457 to 566 (ALLHEVQEIR…KMELQQQQQQ (110 aa)). Transmembrane regions (helical) follow at residues 588 to 608 (ILLA…NCVV) and 621 to 641 (LFLV…FSYV). Topologically, residues 642-649 (DRLFSPPR) are cytoplasmic.

Belongs to the TEX28 family. In terms of assembly, may form homodimers and heterodimers with TMCC2 or TMCC3 via the coiled-coil domains. Interacts with ribosomal proteins RPL4 and RPS6.

Its subcellular location is the endoplasmic reticulum membrane. Functionally, endoplasmic reticulum membrane protein that promotes endoplasmic reticulum-associated endosome fission. Localizes to contact sites between the endoplasmic reticulum and endosomes and acts by promoting recruitment of the endoplasmic reticulum to endosome tubules for fission. Endosome membrane fission of early and late endosomes is essential to separate regions destined for lysosomal degradation from carriers to be recycled to the plasma membrane. The sequence is that of Transmembrane and coiled-coil domains protein 1 (Tmcc1) from Mus musculus (Mouse).